A 307-amino-acid polypeptide reads, in one-letter code: MGDMSDLDRQIDQLRRCELIKENEVKALCAKAREILVEESNVQRVDSPVTVCGDIHGQFYDLKELFRVGGDVPETNYLFMGDFVDRGFYSVETFLLLLALKVRYPDRITLIRGNHESRQITQVYGFYDECLRKYGSVTVWRYCTEIFDYLSLSAIIDGKIFCVHGGLSPSIQTLDQIRTIDRKQEVPHDGPMCDLLWSDPEDTTGWGVSPRGAGYLFGSDVVAQFNAANDIDMICRAHQLVMEGYKWHFNETVLTVWSAPNYCYRCGNVAAILELDEHLQKEFIIFEAAPQETRGIPSKKPVADYFL.

Mn(2+) is bound by residues Asp54, His56, Asp82, and Asn114. Residue His115 is the Proton donor of the active site. Residues His164 and His238 each coordinate Mn(2+). A Leucine methyl ester modification is found at Leu307.

Belongs to the PPP phosphatase family. PP-4 (PP-X) subfamily. In terms of assembly, serine/threonine-protein phosphatase 4 (PP4) occurs in different assemblies of the catalytic and one or more regulatory subunits. Mn(2+) is required as a cofactor.

The protein resides in the cytoplasm. Its subcellular location is the cytoskeleton. The protein localises to the microtubule organizing center. It localises to the centrosome. It carries out the reaction O-phospho-L-seryl-[protein] + H2O = L-seryl-[protein] + phosphate. The catalysed reaction is O-phospho-L-threonyl-[protein] + H2O = L-threonyl-[protein] + phosphate. Functionally, protein phosphatase that regulates many processes such as microtubule organization at centrosomes. The protein is Serine/threonine-protein phosphatase 4 catalytic subunit B (ppp4cb) of Danio rerio (Zebrafish).